Reading from the N-terminus, the 261-residue chain is Cytosolic Fe-S cluster assembly factor Nubp2 homolog (261 aa).

Position 14–21 (14–21 (GKGGVGKS)) interacts with ATP. Residues Cys-188 and Cys-191 each contribute to the [4Fe-4S] cluster site.

Belongs to the Mrp/NBP35 ATP-binding proteins family. NUBP2/CFD1 subfamily. Heterotetramer of 2 Nubp1 and 2 Nubp2 chains. It depends on [4Fe-4S] cluster as a cofactor.

Its subcellular location is the cytoplasm. Its function is as follows. Component of the cytosolic iron-sulfur (Fe/S) protein assembly (CIA) machinery. Required for maturation of extramitochondrial Fe-S proteins. The Nubp1-Nubp2 heterotetramer forms a Fe-S scaffold complex, mediating the de novo assembly of an Fe-S cluster and its transfer to target apoproteins. This chain is Cytosolic Fe-S cluster assembly factor Nubp2 homolog, found in Drosophila willistoni (Fruit fly).